The chain runs to 329 residues: Adenylate isopentenyltransferase (329 aa).

ATP-binding positions include Gly37–Ser44, Lys63, Thr74, Ser129–Ser131, Lys220–Ile222, and Lys313.

Belongs to the IPP transferase family. Mg(2+) is required as a cofactor. In terms of tissue distribution, expressed in roots, stems, leaves and cones.

It catalyses the reaction dimethylallyl diphosphate + AMP = N(6)-(dimethylallyl)adenosine 5'-phosphate + diphosphate. The catalysed reaction is dimethylallyl diphosphate + ADP = N(6)-(dimethylallyl)adenosine 5'-diphosphate + diphosphate. It carries out the reaction dimethylallyl diphosphate + ATP = N(6)-(dimethylallyl)adenosine 5'-triphosphate + diphosphate. Its function is as follows. Involved in cytokinin biosynthesis. Catalyzes the transfer of an isopentenyl group from dimethylallyl diphosphate (DMAPP) to ATP, ADP and AMP. GMP, IMP, CMP or UMP are not used as substrates. This Humulus lupulus (European hop) protein is Adenylate isopentenyltransferase.